Reading from the N-terminus, the 691-residue chain is MSGASNTSQSGSKKKLSFIIRDEQEPLHRSAVSALQYDALHSRLFTGGSDTIIRTWSVPQHKDAFSARGGVRSAGKNSPVQYQSSLERHTDWVTDMVLCGNGKLLVSSSNDTTVKVWSIERDNKHGYLDSLNLHTDYVSCLAYAPLAEKVVSASFDRNIFVYDVNSNFNNFRVLVNNLLGCKNSIYSLATTPNLSHCLFFSPHQQIRMFDPRTNDKPMKMRGHSDNVRALLLNDDGTRALSAGSDGTIRLWDIGMQKNIATGIAHEEGVWTIQVDASFKFVYSGGRDRYVLKSPVNDLSKFQVLFKEEAPVKKLLLSEKENPSSIWVGTWKSDIKRWSLNSANQNSNGGDEEGVSSFSTYYTTCKPRSSSPPPGITAPKHIQRLTDARELQNTPELMISGAPAINKYKILNDKRHVLTSDTEDNVALYDVLAGKKVKEYGKRALENVFEEKSKTVYVPSWFIVDSKSGMLQITLDELDVFSSWLTTKDAGFDDSDKETKVNYGGMMLRSLFERWPPCKLATAEAGESDEVQKATSHYYTLPEHTPFIVCEGNGRPLFRLLVGDAGNEFESGELAQCVPPWVTDMIERNVLPKFNKMPFYLLPHPSTNSKQPKKDRLSATEMLLVKKVMEHVYEKVLGNVDANTVPLNQIHTKIEMYCNDQKLEPETDLRTVKHFYWKQSGELLLYYRPVKN.

8 WD repeats span residues 27–82 (LHRS…PVQY), 88–130 (RHTD…YLDS), 133–168 (LHTD…NSNF), 180–219 (GCKN…KPMK), 222–261 (GHSD…NIAT), 264–303 (AHEE…KFQV), 306–347 (KEEA…QNSN), and 399–438 (SGAP…KVKE).

Belongs to the WD repeat WDR48 family. As to quaternary structure, interacts with usp-46; the interaction increases the catalytic activity of usp-46 in the presence of wdr-20.

Its function is as follows. Together with wdr-20, binds to and stimulates the activity of the deubiquitinating enzyme usp-46, leading to deubiquitination and stabilization of the glr-1 glutamate receptor. The sequence is that of WD repeat-containing protein 48 homolog (wdr-48) from Caenorhabditis briggsae.